A 149-amino-acid chain; its full sequence is Protein E6 (149 aa).

Zinc fingers lie at residues 30–66 (CVEC…CKLC) and 103–139 (CIIC…CAAC). The short motif at 147-149 (TAL) is the PDZ-binding domain element.

It belongs to the papillomaviridae E6 protein family. Forms homodimers. Interacts with ubiquitin-protein ligase UBE3A/E6-AP and thus forms a complex with human TP53. Interacts with human NFX1 and MAGI3. Interacts with human IRF3; this interaction inhibits the establishment of antiviral state. Interacts with human TYK2; this interaction inhibits JAK-STAT activation by interferon alpha. Interacts with host DLG1; this interaction leads to the proteasomal degradation of DLG1.

Its subcellular location is the host cytoplasm. The protein localises to the host nucleus. In terms of biological role, this protein may be involved in the oncogenic potential of this virus (cervical neoplasia-associated virus). Its function is as follows. Plays a major role in the induction and maintenance of cellular transformation. Acts mainly as an oncoprotein by stimulating the destruction of many host cell key regulatory proteins. E6 associates with host UBE3A/E6-AP ubiquitin-protein ligase, and inactivates tumor suppressors TP53 and TP73 by targeting them to the 26S proteasome for degradation. In turn, DNA damage and chromosomal instabilities increase and lead to cell proliferation and cancer development. The complex E6/E6AP targets several other substrates to degradation via the proteasome including host DLG1 or NFX1, a repressor of human telomerase reverse transcriptase (hTERT). The resulting increased expression of hTERT prevents the shortening of telomere length leading to cell immortalization. Other cellular targets including BAK1, Fas-associated death domain-containing protein (FADD) and procaspase 8, are degraded by E6/E6AP causing inhibition of apoptosis. E6 also inhibits immune response by interacting with host IRF3 and TYK2. These interactions prevent IRF3 transcriptional activities and inhibit TYK2-mediated JAK-STAT activation by interferon alpha resulting in inhibition of the interferon signaling pathway. The protein is Protein E6 of Homo sapiens (Human).